We begin with the raw amino-acid sequence, 493 residues long: Chaperone SurA (493 aa).

The N-terminal stretch at 1–33 is a signal peptide; that stretch reads MKRQAFSLLSRLNPWQQLLLSAVLVTLAAPAAA. Positions 46–76 are disordered; that stretch reads FTQQGSQSASQGSTVAPSQPMMGVPQPSSQP. Over residues 48 to 58 the composition is skewed to low complexity; the sequence is QQGSQSASQGS. PpiC domains follow at residues 230-332 and 346-444; these read PTEF…KLVS and IAQT…QVEN.

It is found in the periplasm. The catalysed reaction is [protein]-peptidylproline (omega=180) = [protein]-peptidylproline (omega=0). Its function is as follows. Chaperone involved in the correct folding and assembly of outer membrane proteins. Recognizes specific patterns of aromatic residues and the orientation of their side chains, which are found more frequently in integral outer membrane proteins. May act in both early periplasmic and late outer membrane-associated steps of protein maturation. The sequence is that of Chaperone SurA from Cupriavidus metallidurans (strain ATCC 43123 / DSM 2839 / NBRC 102507 / CH34) (Ralstonia metallidurans).